Reading from the N-terminus, the 263-residue chain is HTH-type transcriptional repressor NanR (263 aa).

Residues 1-22 (MGLMNAFDSQTEDSSPAIGRNL) are disordered. The region spanning 30-98 (KKLSEMVEEE…NGERARVSRP (69 aa)) is the HTH gntR-type domain. A DNA-binding region (H-T-H motif) is located at residues 58–77 (ERELMAFFNVGRPSVREALA).

Belongs to the NanR family.

Its function is as follows. Transcriptional repressor that controls expression of the genes required for the catabolism of sialic acids. In Shigella boydii serotype 4 (strain Sb227), this protein is HTH-type transcriptional repressor NanR.